The following is a 547-amino-acid chain: Chaperonin GroEL (547 aa).

Residues 29–32, 86–90, glycine 413, and aspartate 498 each bind ATP; these read TLGP and DGTTT.

The protein belongs to the chaperonin (HSP60) family. In terms of assembly, forms a cylinder of 14 subunits composed of two heptameric rings stacked back-to-back. Interacts with the co-chaperonin GroES.

Its subcellular location is the cytoplasm. The catalysed reaction is ATP + H2O + a folded polypeptide = ADP + phosphate + an unfolded polypeptide.. In terms of biological role, together with its co-chaperonin GroES, plays an essential role in assisting protein folding. The GroEL-GroES system forms a nano-cage that allows encapsulation of the non-native substrate proteins and provides a physical environment optimized to promote and accelerate protein folding. The protein is Chaperonin GroEL of Herpetosiphon aurantiacus (strain ATCC 23779 / DSM 785 / 114-95).